Reading from the N-terminus, the 127-residue chain is Aspartate 1-decarboxylase (127 aa).

The active-site Schiff-base intermediate with substrate; via pyruvic acid is serine 25. Residue serine 25 is modified to Pyruvic acid (Ser). Residue threonine 57 coordinates substrate. Tyrosine 58 (proton donor) is an active-site residue. 73–75 (GAA) is a substrate binding site.

It belongs to the PanD family. As to quaternary structure, heterooctamer of four alpha and four beta subunits. Requires pyruvate as cofactor. Post-translationally, is synthesized initially as an inactive proenzyme, which is activated by self-cleavage at a specific serine bond to produce a beta-subunit with a hydroxyl group at its C-terminus and an alpha-subunit with a pyruvoyl group at its N-terminus.

It is found in the cytoplasm. The enzyme catalyses L-aspartate + H(+) = beta-alanine + CO2. It functions in the pathway cofactor biosynthesis; (R)-pantothenate biosynthesis; beta-alanine from L-aspartate: step 1/1. Catalyzes the pyruvoyl-dependent decarboxylation of aspartate to produce beta-alanine. The chain is Aspartate 1-decarboxylase from Neisseria gonorrhoeae (strain ATCC 700825 / FA 1090).